The following is a 400-amino-acid chain: Homoserine O-acetyltransferase (400 aa).

The AB hydrolase-1 domain maps to 64–373 (NAILICHALT…TDRGHDAFLL (310 aa)). Serine 169 functions as the Nucleophile in the catalytic mechanism. Residue arginine 239 participates in substrate binding. Catalysis depends on residues aspartate 335 and histidine 368. Substrate is bound at residue aspartate 369.

It belongs to the AB hydrolase superfamily. MetX family. In terms of assembly, homodimer.

Its subcellular location is the cytoplasm. It carries out the reaction L-homoserine + acetyl-CoA = O-acetyl-L-homoserine + CoA. It functions in the pathway amino-acid biosynthesis; L-methionine biosynthesis via de novo pathway; O-acetyl-L-homoserine from L-homoserine: step 1/1. Its function is as follows. Transfers an acetyl group from acetyl-CoA to L-homoserine, forming acetyl-L-homoserine. This Bradyrhizobium diazoefficiens (strain JCM 10833 / BCRC 13528 / IAM 13628 / NBRC 14792 / USDA 110) protein is Homoserine O-acetyltransferase.